Consider the following 85-residue polypeptide: Cell division topological specificity factor (85 aa).

Belongs to the MinE family.

In terms of biological role, prevents the cell division inhibition by proteins MinC and MinD at internal division sites while permitting inhibition at polar sites. This ensures cell division at the proper site by restricting the formation of a division septum at the midpoint of the long axis of the cell. The chain is Cell division topological specificity factor from Shewanella baltica (strain OS223).